Here is a 422-residue protein sequence, read N- to C-terminus: Glycerol-3-phosphate dehydrogenase [NAD(+)] 2 (422 aa).

NAD(+)-binding positions include 69–74 (GSGNWG), F157, K180, and A213. K180 lines the substrate pocket. K273 functions as the Proton acceptor in the catalytic mechanism. Positions 338 and 367 each coordinate NAD(+). Substrate is bound at residue 338–339 (RN).

Belongs to the NAD-dependent glycerol-3-phosphate dehydrogenase family.

It carries out the reaction sn-glycerol 3-phosphate + NAD(+) = dihydroxyacetone phosphate + NADH + H(+). In Candida glabrata (strain ATCC 2001 / BCRC 20586 / JCM 3761 / NBRC 0622 / NRRL Y-65 / CBS 138) (Yeast), this protein is Glycerol-3-phosphate dehydrogenase [NAD(+)] 2 (GPD2).